The primary structure comprises 658 residues: Protein CFAP20DC (658 aa).

2 disordered regions span residues 312 to 522 (QQGE…EEEY) and 589 to 634 (PVNQ…LDSS). A compositionally biased stretch (polar residues) spans 319-328 (SHPVKQTTPL). The segment covering 339–349 (PPRDPSADKGS) has biased composition (basic and acidic residues). Low complexity-rich tracts occupy residues 351–363 (RRGLGLRSSSGSR) and 417–434 (SSGPPSGAAGSSSSLLLD). Basic and acidic residues predominate over residues 494–506 (DPKEDSRVTKGDT). A compositionally biased stretch (acidic residues) spans 507 to 521 (ELEDDFYGSDSSEEE). The span at 625 to 634 (QPLEQSLDSS) shows a compositional bias: polar residues.

The protein is Protein CFAP20DC of Rattus norvegicus (Rat).